We begin with the raw amino-acid sequence, 292 residues long: 4-hydroxy-tetrahydrodipicolinate synthase (292 aa).

Threonine 45 serves as a coordination point for pyruvate. The active-site Proton donor/acceptor is the tyrosine 133. Lysine 162 functions as the Schiff-base intermediate with substrate in the catalytic mechanism. Isoleucine 204 serves as a coordination point for pyruvate.

This sequence belongs to the DapA family. As to quaternary structure, homotetramer; dimer of dimers.

The protein localises to the cytoplasm. The catalysed reaction is L-aspartate 4-semialdehyde + pyruvate = (2S,4S)-4-hydroxy-2,3,4,5-tetrahydrodipicolinate + H2O + H(+). Its pathway is amino-acid biosynthesis; L-lysine biosynthesis via DAP pathway; (S)-tetrahydrodipicolinate from L-aspartate: step 3/4. Functionally, catalyzes the condensation of (S)-aspartate-beta-semialdehyde [(S)-ASA] and pyruvate to 4-hydroxy-tetrahydrodipicolinate (HTPA). This chain is 4-hydroxy-tetrahydrodipicolinate synthase, found in Maridesulfovibrio salexigens (strain ATCC 14822 / DSM 2638 / NCIMB 8403 / VKM B-1763) (Desulfovibrio salexigens).